We begin with the raw amino-acid sequence, 143 residues long: Ribosome-binding factor A (143 aa).

Positions 123-143 are disordered; the sequence is DNSLQENYKDSDKETKVEKLR.

The protein belongs to the RbfA family. In terms of assembly, monomer. Binds 30S ribosomal subunits, but not 50S ribosomal subunits or 70S ribosomes.

The protein localises to the cytoplasm. Its function is as follows. One of several proteins that assist in the late maturation steps of the functional core of the 30S ribosomal subunit. Associates with free 30S ribosomal subunits (but not with 30S subunits that are part of 70S ribosomes or polysomes). Required for efficient processing of 16S rRNA. May interact with the 5'-terminal helix region of 16S rRNA. This chain is Ribosome-binding factor A, found in Francisella philomiragia subsp. philomiragia (strain ATCC 25017 / CCUG 19701 / FSC 153 / O#319-036).